The following is a 101-amino-acid chain: MEPVDPNLEPWKHPGSQPRTACNNCYCKKCCFHCQVCFTKKGLGISYGRKKRRQRRRPPQDSQTHQSSLSKQPTSQLRGDPTGPTESKKKVERETETDPVH.

Residues 1 to 24 form an interaction with human CREBBP region; sequence MEPVDPNLEPWKHPGSQPRTACNN. Residues 1 to 48 form a transactivation region; the sequence is MEPVDPNLEPWKHPGSQPRTACNNCYCKKCCFHCQVCFTKKGLGISYG. Zn(2+) is bound by residues cysteine 22, cysteine 25, and cysteine 27. The interval 22–37 is cysteine-rich; that stretch reads CNNCYCKKCCFHCQVC. Lysine 28 carries the N6-acetyllysine; by host PCAF modification. Zn(2+)-binding residues include cysteine 30, histidine 33, cysteine 34, and cysteine 37. A core region spans residues 38–48; it reads FTKKGLGISYG. The tract at residues 47–101 is disordered; that stretch reads YGRKKRRQRRRPPQDSQTHQSSLSKQPTSQLRGDPTGPTESKKKVERETETDPVH. A compositionally biased stretch (basic residues) spans 48 to 57; it reads GRKKRRQRRR. The short motif at 49–57 is the Nuclear localization signal, RNA-binding (TAR), and protein transduction element; it reads RKKRRQRRR. The segment at 49 to 86 is interaction with the host capping enzyme RNGTT; the sequence is RKKRRQRRRPPQDSQTHQSSLSKQPTSQLRGDPTGPTE. An N6-acetyllysine; by host EP300 and GCN5L2 mark is found at lysine 50 and lysine 51. An asymmetric dimethylarginine; by host PRMT6 mark is found at arginine 52 and arginine 53. Polar residues predominate over residues 61 to 77; the sequence is DSQTHQSSLSKQPTSQL. Lysine 71 is covalently cross-linked (Glycyl lysine isopeptide (Lys-Gly) (interchain with G-Cter in ubiquitin)). Positions 78–80 match the Cell attachment site motif; sequence RGD. The segment covering 86–101 has biased composition (basic and acidic residues); that stretch reads ESKKKVERETETDPVH.

The protein belongs to the lentiviruses Tat family. As to quaternary structure, interacts with host CCNT1. Associates with the P-TEFb complex composed at least of Tat, P-TEFb (CDK9 and CCNT1), TAR RNA, RNA Pol II. Recruits the HATs CREBBP, TAF1/TFIID, EP300, PCAF and GCN5L2. Interacts with host KAT5/Tip60; this interaction targets the latter to degradation. Interacts with the host deacetylase SIRT1. Interacts with host capping enzyme RNGTT; this interaction stimulates RNGTT. Binds to host KDR, and to the host integrins ITGAV/ITGB3 and ITGA5/ITGB1. Interacts with host KPNB1/importin beta-1 without previous binding to KPNA1/importin alpha-1. Interacts with EIF2AK2. Interacts with host nucleosome assembly protein NAP1L1; this interaction may be required for the transport of Tat within the nucleus, since the two proteins interact at the nuclear rim. Interacts with host C1QBP/SF2P32; this interaction involves lysine-acetylated Tat. Interacts with the host chemokine receptors CCR2, CCR3 and CXCR4. Interacts with host DPP4/CD26; this interaction may trigger an anti-proliferative effect. Interacts with host LDLR. Interacts with the host extracellular matrix metalloproteinase MMP1. Interacts with host PRMT6; this interaction mediates Tat's methylation. Interacts with, and is ubiquitinated by MDM2/Hdm2. Interacts with host PSMC3 and HTATIP2. Interacts with STAB1; this interaction may overcome SATB1-mediated repression of IL2 and IL2RA (interleukin) in T cells by binding to the same domain than HDAC1. Interacts (when acetylated) with human CDK13, thereby increasing HIV-1 mRNA splicing and promoting the production of the doubly spliced HIV-1 protein Nef. Interacts with host TBP; this interaction modulates the activity of transcriptional pre-initiation complex. Interacts with host RELA. Interacts with host PLSCR1; this interaction negatively regulates Tat transactivation activity by altering its subcellular distribution. In terms of processing, asymmetrical arginine methylation by host PRMT6 seems to diminish the transactivation capacity of Tat and affects the interaction with host CCNT1. Acetylation by EP300, CREBBP, GCN5L2/GCN5 and PCAF regulates the transactivation activity of Tat. EP300-mediated acetylation of Lys-50 promotes dissociation of Tat from the TAR RNA through the competitive binding to PCAF's bromodomain. In addition, the non-acetylated Tat's N-terminus can also interact with PCAF. PCAF-mediated acetylation of Lys-28 enhances Tat's binding to CCNT1. Lys-50 is deacetylated by SIRT1. Post-translationally, polyubiquitination by host MDM2 does not target Tat to degradation, but activates its transactivation function and fosters interaction with CCNT1 and TAR RNA. In terms of processing, phosphorylated by EIF2AK2 on serine and threonine residues adjacent to the basic region important for TAR RNA binding and function. Phosphorylation of Tat by EIF2AK2 is dependent on the prior activation of EIF2AK2 by dsRNA.

Its subcellular location is the host nucleus. The protein resides in the host nucleolus. It is found in the host cytoplasm. The protein localises to the secreted. Transcriptional activator that increases RNA Pol II processivity, thereby increasing the level of full-length viral transcripts. Recognizes a hairpin structure at the 5'-LTR of the nascent viral mRNAs referred to as the transactivation responsive RNA element (TAR) and recruits the cyclin T1-CDK9 complex (P-TEFb complex) that will in turn hyperphosphorylate the RNA polymerase II to allow efficient elongation. The CDK9 component of P-TEFb and other Tat-activated kinases hyperphosphorylate the C-terminus of RNA Pol II that becomes stabilized and much more processive. Other factors such as HTATSF1/Tat-SF1, SUPT5H/SPT5, and HTATIP2 are also important for Tat's function. Besides its effect on RNA Pol II processivity, Tat induces chromatin remodeling of proviral genes by recruiting the histone acetyltransferases (HATs) CREBBP, EP300 and PCAF to the chromatin. This also contributes to the increase in proviral transcription rate, especially when the provirus integrates in transcriptionally silent region of the host genome. To ensure maximal activation of the LTR, Tat mediates nuclear translocation of NF-kappa-B by interacting with host RELA. Through its interaction with host TBP, Tat may also modulate transcription initiation. Tat can reactivate a latently infected cell by penetrating in it and transactivating its LTR promoter. In the cytoplasm, Tat is thought to act as a translational activator of HIV-1 mRNAs. In terms of biological role, extracellular circulating Tat can be endocytosed by surrounding uninfected cells via the binding to several surface receptors such as CD26, CXCR4, heparan sulfate proteoglycans (HSPG) or LDLR. Neurons are rarely infected, but they internalize Tat via their LDLR. Through its interaction with nuclear HATs, Tat is potentially able to control the acetylation-dependent cellular gene expression. Modulates the expression of many cellular genes involved in cell survival, proliferation or in coding for cytokines or cytokine receptors. Tat plays a role in T-cell and neurons apoptosis. Tat induced neurotoxicity and apoptosis probably contribute to neuroAIDS. Circulating Tat also acts as a chemokine-like and/or growth factor-like molecule that binds to specific receptors on the surface of the cells, affecting many cellular pathways. In the vascular system, Tat binds to ITGAV/ITGB3 and ITGA5/ITGB1 integrins dimers at the surface of endothelial cells and competes with bFGF for heparin-binding sites, leading to an excess of soluble bFGF. The sequence is that of Protein Tat from Human immunodeficiency virus type 1 group M subtype B (isolate YU-2) (HIV-1).